Reading from the N-terminus, the 70-residue chain is Drosomycin (70 aa).

The first 20 residues, 1-20 (MMQIKYLFALFAVLMLVVLG), serve as a signal peptide directing secretion. The propeptide occupies 21–26 (ANEADA). 4 disulfide bridges follow: C28-C70, C37-C59, C45-C65, and C49-C67. N42 carries N-linked (GlcNAc...) asparagine glycosylation.

In terms of tissue distribution, hemolymph (at protein level). Synthesized in the fat body and is secreted into the blood. In larvae, expressed in the visceral branches and posterior spiracles of the trachea.

It localises to the secreted. Functionally, possesses antifungal activity and is active against a relatively broad spectrum of filamentous fungi. It inhibits spore germination at high concentrations and at low concentrations delays growth of hyphae which subsequently exhibit abnormal morphology. Spz C-106 in the hemolymph controls expression of the antifungal peptide by acting as a ligand of Tl and inducing an intracellular signaling pathway. Part of a psh-dependent Toll pathway, which may function in activating the systematic immune response in response to localized melanization of the tracheal system. The polypeptide is Drosomycin (Drs) (Drosophila melanogaster (Fruit fly)).